The sequence spans 568 residues: Glucose-6-phosphate isomerase, cytosolic 1 (568 aa).

Catalysis depends on Glu-360, which acts as the Proton donor. Residues His-391 and Lys-516 contribute to the active site.

This sequence belongs to the GPI family. In terms of assembly, homodimer.

It is found in the cytoplasm. It catalyses the reaction alpha-D-glucose 6-phosphate = beta-D-fructose 6-phosphate. It participates in carbohydrate degradation; glycolysis; D-glyceraldehyde 3-phosphate and glycerone phosphate from D-glucose: step 2/4. The chain is Glucose-6-phosphate isomerase, cytosolic 1 (PGIC1) from Clarkia mildrediae.